Consider the following 113-residue polypeptide: uncharacterized protein (113 aa).

Transmembrane regions (helical) follow at residues 25–45 (FGFCYFLFLISFIMCIVCFII) and 49–69 (FEVEIILVILFPFLLLILSVW).

The protein localises to the host membrane. This is an uncharacterized protein from Spiroplasma citri (SpV1).